Here is a 205-residue protein sequence, read N- to C-terminus: MAGRAQGARWMARRVIGLTGGIATGKSTVGRLLAGWGIPVIDADLLAREAVAPGSAALAEIVQHYGSTMLTNAGALDRSALARIIFSDPQERRWVESRIHPSVRAAMQAAVEREPGTICLMIPLLFEAGMTDLVTEIWVVSCKPERQHARLKERDGLDDQAIAARIASQWPLTEKVRHADVVLDNDGDFAHLKIQVERALDQASI.

The DPCK domain occupies 15–205 (VIGLTGGIAT…VERALDQASI (191 aa)). 23-28 (ATGKST) is a binding site for ATP.

It belongs to the CoaE family.

It is found in the cytoplasm. It catalyses the reaction 3'-dephospho-CoA + ATP = ADP + CoA + H(+). It functions in the pathway cofactor biosynthesis; coenzyme A biosynthesis; CoA from (R)-pantothenate: step 5/5. Functionally, catalyzes the phosphorylation of the 3'-hydroxyl group of dephosphocoenzyme A to form coenzyme A. The polypeptide is Dephospho-CoA kinase (Gloeobacter violaceus (strain ATCC 29082 / PCC 7421)).